The following is a 248-amino-acid chain: Small ribosomal subunit protein uS2c (248 aa).

This sequence belongs to the universal ribosomal protein uS2 family.

The protein localises to the plastid. It localises to the chloroplast. In Trachelium caeruleum (Blue throatwort), this protein is Small ribosomal subunit protein uS2c (rps2).